A 59-amino-acid polypeptide reads, in one-letter code: Probable stress-associated endoplasmic reticulum protein (59 aa).

A disordered region spans residues 1-30 (MSQSRTLRQKSQKYQENIEKRGVASPKKKE). Topologically, residues 1–34 (MSQSRTLRQKSQKYQENIEKRGVASPKKKEDGLN) are cytoplasmic. Positions 16 to 30 (ENIEKRGVASPKKKE) are enriched in basic and acidic residues. The helical; Anchor for type IV membrane protein transmembrane segment at 35–55 (INPYVLGFIIFVVVGSTLLQI) threads the bilayer. At 56 to 59 (LKGQ) the chain is on the extracellular side.

Belongs to the RAMP4 family.

The protein resides in the membrane. Its subcellular location is the endoplasmic reticulum membrane. In terms of biological role, may interact with target proteins during translocation into the lumen of the endoplasmic reticulum. May protect unfolded target proteins against degradation and facilitate correct glycosylation. This Dictyostelium discoideum (Social amoeba) protein is Probable stress-associated endoplasmic reticulum protein (serp).